The primary structure comprises 225 residues: F-box protein SKIP27 (225 aa).

The F-box domain occupies 121 to 169 (KSRLECLPQDLLIRVICGVDHEDLKSLKLVSKSIREASLVAKTLHFAYT).

In terms of assembly, part of a SCF (ASK-cullin-F-box) protein ligase complex. Interacts with SKP1A/ASK1 and SPK1B/ASK2.

The protein localises to the nucleus. It participates in protein modification; protein ubiquitination. Functionally, component of SCF(ASK-cullin-F-box) E3 ubiquitin ligase complexes, which may mediate the ubiquitination and subsequent proteasomal degradation of target proteins. The protein is F-box protein SKIP27 (SKIP27) of Arabidopsis thaliana (Mouse-ear cress).